The following is a 304-amino-acid chain: UDP-3-O-acyl-N-acetylglucosamine deacetylase (304 aa).

Positions 79, 238, and 242 each coordinate Zn(2+). His-265 functions as the Proton donor in the catalytic mechanism.

Belongs to the LpxC family. It depends on Zn(2+) as a cofactor.

It carries out the reaction a UDP-3-O-[(3R)-3-hydroxyacyl]-N-acetyl-alpha-D-glucosamine + H2O = a UDP-3-O-[(3R)-3-hydroxyacyl]-alpha-D-glucosamine + acetate. It participates in glycolipid biosynthesis; lipid IV(A) biosynthesis; lipid IV(A) from (3R)-3-hydroxytetradecanoyl-[acyl-carrier-protein] and UDP-N-acetyl-alpha-D-glucosamine: step 2/6. Catalyzes the hydrolysis of UDP-3-O-myristoyl-N-acetylglucosamine to form UDP-3-O-myristoylglucosamine and acetate, the committed step in lipid A biosynthesis. This chain is UDP-3-O-acyl-N-acetylglucosamine deacetylase, found in Pseudoalteromonas atlantica (strain T6c / ATCC BAA-1087).